The primary structure comprises 609 residues: Arginine--tRNA ligase (609 aa).

The short motif at 132-142 is the 'HIGH' region element; the sequence is ANPTSSLHVGH.

This sequence belongs to the class-I aminoacyl-tRNA synthetase family. In terms of assembly, monomer.

The protein resides in the cytoplasm. The enzyme catalyses tRNA(Arg) + L-arginine + ATP = L-arginyl-tRNA(Arg) + AMP + diphosphate. The polypeptide is Arginine--tRNA ligase (Psychrobacter sp. (strain PRwf-1)).